Consider the following 120-residue polypeptide: NADH-ubiquinone oxidoreductase chain 3 (120 aa).

The next 3 membrane-spanning stretches (helical) occupy residues 7–27, 62–82, and 89–109; these read FVYILVLLAISTGLSVILFFL, FYLVAILFLIFDLEITFLFPF, and MTLLSYSLMLIFLIILTIGFI.

The protein belongs to the complex I subunit 3 family.

The protein resides in the mitochondrion membrane. The enzyme catalyses a ubiquinone + NADH + 5 H(+)(in) = a ubiquinol + NAD(+) + 4 H(+)(out). Its function is as follows. Core subunit of the mitochondrial membrane respiratory chain NADH dehydrogenase (Complex I) that is believed to belong to the minimal assembly required for catalysis. Complex I functions in the transfer of electrons from NADH to the respiratory chain. The immediate electron acceptor for the enzyme is believed to be ubiquinone. This Dictyostelium discoideum (Social amoeba) protein is NADH-ubiquinone oxidoreductase chain 3 (nad3).